We begin with the raw amino-acid sequence, 146 residues long: Decoration protein (146 aa).

Homotrimer. Interacts with the major capsid protein.

It is found in the virion. Cooperatively binds the expanded capsid, thereby stabilizing the mature capsid shell and allowing the large viral DNA to be packaged. Trimers of capsid decoration proteins molecules are located at local and icosahedral threefold axes and stabilize the expanded capsid, which shows increased spacing between capsomers. In Thermus thermophilus (Thermus thermophilus phage P23-45), this protein is Decoration protein.